Here is a 56-residue protein sequence, read N- to C-terminus: MKYFLSATFLIIVFMYLMYFCISIVVNNARVQQDLFYHYNYVPDTLLNTVRVHKLK.

Plays an essential role in the process of oral infection. May participate in the crossing of occlusion-derived virions through the host peritrophic membrane during oral infection. In Autographa californica nuclear polyhedrosis virus (AcMNPV), this protein is Per os infectivity factor AC110.